The chain runs to 225 residues: Ribose-5-phosphate isomerase A (225 aa).

Substrate is bound by residues 33 to 36 (TGST), 84 to 87 (DGAD), and 96 to 99 (KGGG). E105 functions as the Proton acceptor in the catalytic mechanism. K123 serves as a coordination point for substrate.

It belongs to the ribose 5-phosphate isomerase family. In terms of assembly, homodimer.

The catalysed reaction is aldehydo-D-ribose 5-phosphate = D-ribulose 5-phosphate. Its pathway is carbohydrate degradation; pentose phosphate pathway; D-ribose 5-phosphate from D-ribulose 5-phosphate (non-oxidative stage): step 1/1. Functionally, catalyzes the reversible conversion of ribose-5-phosphate to ribulose 5-phosphate. The protein is Ribose-5-phosphate isomerase A of Halobacterium salinarum (strain ATCC 29341 / DSM 671 / R1).